The primary structure comprises 413 residues: Zinc finger CCCH domain-containing protein 6 (413 aa).

3 disordered regions span residues 28–61 (PSQV…FGGP), 159–191 (DSAS…TLPA), and 333–356 (QPGG…RDSK). Over residues 176–189 (PSITDENTSTSSTL) the composition is skewed to polar residues. A C3H1-type zinc finger spans residues 357–385 (PKIMKACMYFNSARGCRHGANCMYQHDAT). Over residues 389-403 (PRNLNNGNINTSDMQ) the composition is skewed to polar residues. Positions 389–413 (PRNLNNGNINTSDMQNAKRMRFDRD) are disordered.

The protein is Zinc finger CCCH domain-containing protein 6 of Arabidopsis thaliana (Mouse-ear cress).